The sequence spans 195 residues: Imidazoleglycerol-phosphate dehydratase (195 aa).

The protein belongs to the imidazoleglycerol-phosphate dehydratase family.

The protein localises to the cytoplasm. It catalyses the reaction D-erythro-1-(imidazol-4-yl)glycerol 3-phosphate = 3-(imidazol-4-yl)-2-oxopropyl phosphate + H2O. It functions in the pathway amino-acid biosynthesis; L-histidine biosynthesis; L-histidine from 5-phospho-alpha-D-ribose 1-diphosphate: step 6/9. The polypeptide is Imidazoleglycerol-phosphate dehydratase (Burkholderia cenocepacia (strain HI2424)).